The following is a 119-amino-acid chain: MARVKRGVTTHARHKKVLKASKGFFGRSSTNYRIALERLEKSLQYAYRDRRVKKRDFRALWIQRINAAVREHGMTYSVFINGLKKAEIDMDRKVLAAIAFDDAAAFAEIVKKVQGALAA.

Belongs to the bacterial ribosomal protein bL20 family.

Its function is as follows. Binds directly to 23S ribosomal RNA and is necessary for the in vitro assembly process of the 50S ribosomal subunit. It is not involved in the protein synthesizing functions of that subunit. The chain is Large ribosomal subunit protein bL20 from Granulibacter bethesdensis (strain ATCC BAA-1260 / CGDNIH1).